Reading from the N-terminus, the 249-residue chain is Probable transcriptional regulatory protein Sfum_0996 (249 aa).

It belongs to the TACO1 family.

The protein localises to the cytoplasm. The protein is Probable transcriptional regulatory protein Sfum_0996 of Syntrophobacter fumaroxidans (strain DSM 10017 / MPOB).